The chain runs to 384 residues: Histidinol-phosphate aminotransferase (384 aa).

Lys223 bears the N6-(pyridoxal phosphate)lysine mark.

Belongs to the class-II pyridoxal-phosphate-dependent aminotransferase family. Pyridoxal 5'-phosphate is required as a cofactor.

The enzyme catalyses L-histidinol phosphate + 2-oxoglutarate = 3-(imidazol-4-yl)-2-oxopropyl phosphate + L-glutamate. It participates in amino-acid biosynthesis; L-histidine biosynthesis; L-histidine from 5-phospho-alpha-D-ribose 1-diphosphate: step 7/9. The protein is Histidinol-phosphate aminotransferase (his3) of Schizosaccharomyces pombe (strain 972 / ATCC 24843) (Fission yeast).